The chain runs to 360 residues: Alanine racemase (360 aa).

Residue lysine 36 is the Proton acceptor; specific for D-alanine of the active site. Lysine 36 carries the N6-(pyridoxal phosphate)lysine modification. Substrate is bound at residue arginine 132. The Proton acceptor; specific for L-alanine role is filled by tyrosine 256. Methionine 304 is a binding site for substrate.

It belongs to the alanine racemase family. It depends on pyridoxal 5'-phosphate as a cofactor.

It carries out the reaction L-alanine = D-alanine. It functions in the pathway amino-acid biosynthesis; D-alanine biosynthesis; D-alanine from L-alanine: step 1/1. Its function is as follows. Catalyzes the interconversion of L-alanine and D-alanine. May also act on other amino acids. The chain is Alanine racemase (alr) from Haemophilus influenzae (strain ATCC 51907 / DSM 11121 / KW20 / Rd).